The chain runs to 243 residues: Aspartate/glutamate leucyltransferase (243 aa).

It belongs to the R-transferase family. Bpt subfamily.

The protein resides in the cytoplasm. It catalyses the reaction N-terminal L-glutamyl-[protein] + L-leucyl-tRNA(Leu) = N-terminal L-leucyl-L-glutamyl-[protein] + tRNA(Leu) + H(+). The catalysed reaction is N-terminal L-aspartyl-[protein] + L-leucyl-tRNA(Leu) = N-terminal L-leucyl-L-aspartyl-[protein] + tRNA(Leu) + H(+). In terms of biological role, functions in the N-end rule pathway of protein degradation where it conjugates Leu from its aminoacyl-tRNA to the N-termini of proteins containing an N-terminal aspartate or glutamate. The polypeptide is Aspartate/glutamate leucyltransferase (Teredinibacter turnerae (strain ATCC 39867 / T7901)).